The following is a 123-amino-acid chain: Small ribosomal subunit protein uS13 (123 aa).

The interval Arg-93–Lys-123 is disordered.

Belongs to the universal ribosomal protein uS13 family. As to quaternary structure, part of the 30S ribosomal subunit. Forms a loose heterodimer with protein S19. Forms two bridges to the 50S subunit in the 70S ribosome.

Its function is as follows. Located at the top of the head of the 30S subunit, it contacts several helices of the 16S rRNA. In the 70S ribosome it contacts the 23S rRNA (bridge B1a) and protein L5 of the 50S subunit (bridge B1b), connecting the 2 subunits; these bridges are implicated in subunit movement. Contacts the tRNAs in the A and P-sites. The polypeptide is Small ribosomal subunit protein uS13 (Clostridium botulinum (strain Kyoto / Type A2)).